Here is a 115-residue protein sequence, read N- to C-terminus: Probable mycobacterial cidal antitoxin Rv3188 (115 aa).

The protein belongs to the MbcA/ParS/Xre antitoxin family. As to quaternary structure, forms a heterotetramer with cognate toxin Rv3189.

Functionally, probable antitoxin component of a type II toxin-antitoxin (TA) system. Neutralizes the activity of cognate toxin Rv3189 by blocking access to the toxin active site. The sequence is that of Probable mycobacterial cidal antitoxin Rv3188 from Mycobacterium tuberculosis (strain ATCC 25618 / H37Rv).